Here is a 33-residue protein sequence, read N- to C-terminus: Photosystem II reaction center protein Psb30 (33 aa).

The chain crosses the membrane as a helical span at residues 5–25 (VVAQLTVLALIVVSGPLVIGL).

It belongs to the Psb30/Ycf12 family. In terms of assembly, PSII is composed of 1 copy each of membrane proteins PsbA, PsbB, PsbC, PsbD, PsbE, PsbF, PsbH, PsbI, PsbJ, PsbK, PsbL, PsbM, PsbT, PsbX, PsbY, PsbZ, Psb30/Ycf12, peripheral proteins of the oxygen-evolving complex and a large number of cofactors. It forms dimeric complexes.

The protein resides in the plastid. Its subcellular location is the chloroplast thylakoid membrane. A core subunit of photosystem II (PSII), probably helps stabilize the reaction center. In Zygnema circumcarinatum (Green alga), this protein is Photosystem II reaction center protein Psb30.